A 308-amino-acid chain; its full sequence is Putative gluconeogenesis factor (308 aa).

This sequence belongs to the gluconeogenesis factor family.

It is found in the cytoplasm. In terms of biological role, required for morphogenesis under gluconeogenic growth conditions. The protein is Putative gluconeogenesis factor of Pasteurella multocida (strain Pm70).